Here is a 72-residue protein sequence, read N- to C-terminus: Conotoxin Lt6.3 (72 aa).

Positions 1 to 22 (MKLTSVVIVAVLFLAACQLTTS) are cleaved as a signal peptide. The propeptide occupies 23 to 46 (DGSRGTWKDRAVRSITKVSMLRWP). 3 cysteine pairs are disulfide-bonded: Cys-47-Cys-61, Cys-54-Cys-64, and Cys-60-Cys-71.

Belongs to the conotoxin O1 superfamily. Expressed by the venom duct.

It localises to the secreted. This is Conotoxin Lt6.3 from Conus litteratus (Lettered cone).